The primary structure comprises 175 residues: Adenine phosphoribosyltransferase (175 aa).

This sequence belongs to the purine/pyrimidine phosphoribosyltransferase family. Homodimer.

It is found in the cytoplasm. The catalysed reaction is AMP + diphosphate = 5-phospho-alpha-D-ribose 1-diphosphate + adenine. The protein operates within purine metabolism; AMP biosynthesis via salvage pathway; AMP from adenine: step 1/1. Functionally, catalyzes a salvage reaction resulting in the formation of AMP, that is energically less costly than de novo synthesis. The protein is Adenine phosphoribosyltransferase of Francisella tularensis subsp. holarctica (strain FTNF002-00 / FTA).